Here is a 400-residue protein sequence, read N- to C-terminus: tRNA (guanine-N(7)-)-methyltransferase (400 aa).

S-adenosyl-L-methionine is bound by residues E124, E149, and D176. D232 is a substrate binding site.

The protein belongs to the class I-like SAM-binding methyltransferase superfamily. TrmB family.

It carries out the reaction guanosine(46) in tRNA + S-adenosyl-L-methionine = N(7)-methylguanosine(46) in tRNA + S-adenosyl-L-homocysteine. Its pathway is tRNA modification; N(7)-methylguanine-tRNA biosynthesis. Functionally, catalyzes the formation of N(7)-methylguanine at position 46 (m7G46) in tRNA. This chain is tRNA (guanine-N(7)-)-methyltransferase, found in Helicobacter pylori (strain J99 / ATCC 700824) (Campylobacter pylori J99).